A 98-amino-acid polypeptide reads, in one-letter code: Integration host factor subunit alpha (98 aa).

The tract at residues 49–71 (FGNFDLRDKNQRPGRNPKTGEDI) is disordered.

It belongs to the bacterial histone-like protein family. As to quaternary structure, heterodimer of an alpha and a beta chain.

This protein is one of the two subunits of integration host factor, a specific DNA-binding protein that functions in genetic recombination as well as in transcriptional and translational control. In Shewanella halifaxensis (strain HAW-EB4), this protein is Integration host factor subunit alpha.